A 263-amino-acid polypeptide reads, in one-letter code: H-2 class II histocompatibility antigen, A-S beta chain (263 aa).

The first 27 residues, 1 to 27, serve as a signal peptide directing secretion; it reads MALQIPSLLLSAAVVVLMVLSSPGTEG. Residues 28 to 120 are beta-1; that stretch reads GDSERHFVFQ…VETHTSLRRL (93 aa). Over 28–224 the chain is Extracellular; sequence GDSERHFVFQ…RAQSESARSK (197 aa). 2 disulfide bridges follow: Cys42–Cys104 and Cys143–Cys199. An N-linked (GlcNAc...) asparagine glycan is attached at Asn46. Positions 121–214 are beta-2; the sequence is EQPNVVISLS…SLKSPITVEW (94 aa). In terms of domain architecture, Ig-like C1-type spans 123–211; it reads PNVVISLSRT…EHPSLKSPIT (89 aa). A connecting peptide region spans residues 215–224; that stretch reads RAQSESARSK. Residues 225–245 form a helical membrane-spanning segment; that stretch reads MLSGIGGCVLGVIFLGLGLFI. Residues 246 to 263 lie on the Cytoplasmic side of the membrane; the sequence is RHRSQKGPRGPPPAGLLQ.

It belongs to the MHC class II family. Post-translationally, ubiquitinated in immature dendritic cells leading to down-regulation of MHC class II.

It localises to the membrane. The polypeptide is H-2 class II histocompatibility antigen, A-S beta chain (H2-Ab1) (Mus musculus (Mouse)).